Consider the following 776-residue polypeptide: Transcription activator of gluconeogenesis HCAG_03671 (776 aa).

Positions 1–70 (MTASTQNGSP…NAKDPLRPRR (70 aa)) are disordered. Polar residues-rich tracts occupy residues 21–41 (NQESKNMTANPADASESQSPA) and 50–60 (ENGQKHTSTAA). The segment at residues 77-105 (CFACQRAHLTCGDERPCQRCIKRGLQDAC) is a DNA-binding region (zn(2)-C6 fungal-type). 5 disordered regions span residues 140–159 (RTNASQQQNGPNSNSNKDSR), 179–248 (TQAK…PFGA), 286–351 (GAGD…NIYN), 556–593 (NLNVNTGGSSPRGSGTFTPRNGNGVDPHSGMSASGGGG), and 651–726 (REAQ…SPKQ). Residues 142–155 (NASQQQNGPNSNSN) are compositionally biased toward low complexity. Positions 195–217 (MQDTSINPSAFQAPSPTSTPNFD) are enriched in polar residues. The segment covering 218-229 (LSSNPPNRNLSS) has biased composition (low complexity). Composition is skewed to polar residues over residues 230–244 (AMTQTPSSASNQTQD), 292–322 (PSDSATQRGSIGRSSGTFTAQNFGDSTNTQP), 334–351 (WNPSGQSQTNPRNNNIYN), and 557–576 (LNVNTGGSSPRGSGTFTPRN). A compositionally biased stretch (gly residues) spans 657 to 669 (GPDGKGGGGGGGD). Over residues 670 to 714 (VATTAATTSTSTSNGANSSGHANANRNNTNPNNSSPPSSSSAAAA) the composition is skewed to low complexity.

It belongs to the ERT1/acuK family.

The protein localises to the nucleus. Its function is as follows. Transcription factor which regulates nonfermentable carbon utilization. Activator of gluconeogenetic genes. This Ajellomyces capsulatus (strain NAm1 / WU24) (Darling's disease fungus) protein is Transcription activator of gluconeogenesis HCAG_03671.